Here is a 505-residue protein sequence, read N- to C-terminus: uncharacterized protein (505 aa).

Polar residues predominate over residues 1–16 (MPPTASLTRSPPTASQ). Residues 1–474 (MPPTASLTRS…TPPTASLTRT (474 aa)) are disordered. Composition is skewed to low complexity over residues 17-33 (TRTL…PRAS) and 40-59 (TASL…PPRA). The span at 66–78 (SRASLTRTLSRAS) shows a compositional bias: polar residues. 3 stretches are compositionally biased toward low complexity: residues 96 to 122 (SLTR…PPRT), 129 to 140 (PRTSQTRTPPRA), and 147 to 158 (SRASRTRTPPRA). 2 stretches are compositionally biased toward polar residues: residues 165 to 177 (SRAS…SRAS) and 188 to 200 (TRTP…TRTP). Residues 201–226 (PTASLTRASRTRTPPRTSQTRTPPRA) show a composition bias toward low complexity. Polar residues-rich tracts occupy residues 233 to 254 (SRAS…SRAS), 265 to 293 (TRTP…SLTR), 309 to 329 (LTRT…SLTR), 345 to 365 (LTRT…SLTR), 373 to 383 (TRTPSRASLTR), 399 to 408 (LTRSPPTASL), and 435 to 448 (LTRS…TRTP). Over residues 453–474 (LRRTPPRTSLTRTPPTASLTRT) the composition is skewed to low complexity.

This is an uncharacterized protein from Homo sapiens (Human).